The chain runs to 444 residues: Na(+)-translocating NADH-quinone reductase subunit A (444 aa).

This sequence belongs to the NqrA family. In terms of assembly, composed of six subunits; NqrA, NqrB, NqrC, NqrD, NqrE and NqrF.

The enzyme catalyses a ubiquinone + n Na(+)(in) + NADH + H(+) = a ubiquinol + n Na(+)(out) + NAD(+). Functionally, NQR complex catalyzes the reduction of ubiquinone-1 to ubiquinol by two successive reactions, coupled with the transport of Na(+) ions from the cytoplasm to the periplasm. NqrA to NqrE are probably involved in the second step, the conversion of ubisemiquinone to ubiquinol. The protein is Na(+)-translocating NADH-quinone reductase subunit A of Shewanella amazonensis (strain ATCC BAA-1098 / SB2B).